A 267-amino-acid polypeptide reads, in one-letter code: 3-deoxy-manno-octulosonate cytidylyltransferase (267 aa).

It belongs to the KdsB family.

Its subcellular location is the cytoplasm. The enzyme catalyses 3-deoxy-alpha-D-manno-oct-2-ulosonate + CTP = CMP-3-deoxy-beta-D-manno-octulosonate + diphosphate. It functions in the pathway nucleotide-sugar biosynthesis; CMP-3-deoxy-D-manno-octulosonate biosynthesis; CMP-3-deoxy-D-manno-octulosonate from 3-deoxy-D-manno-octulosonate and CTP: step 1/1. The protein operates within bacterial outer membrane biogenesis; lipopolysaccharide biosynthesis. Functionally, activates KDO (a required 8-carbon sugar) for incorporation into bacterial lipopolysaccharide in Gram-negative bacteria. This Paraburkholderia phymatum (strain DSM 17167 / CIP 108236 / LMG 21445 / STM815) (Burkholderia phymatum) protein is 3-deoxy-manno-octulosonate cytidylyltransferase.